A 352-amino-acid chain; its full sequence is Chalcone synthase C (352 aa).

Cysteine 170 is a catalytic residue.

This sequence belongs to the thiolase-like superfamily. Chalcone/stilbene synthases family.

It carries out the reaction (E)-4-coumaroyl-CoA + 3 malonyl-CoA + 3 H(+) = 2',4,4',6'-tetrahydroxychalcone + 3 CO2 + 4 CoA. Its pathway is secondary metabolite biosynthesis; flavonoid biosynthesis. In terms of biological role, the primary product of this enzyme is 4,2',4',6'-tetrahydroxychalcone (also termed naringenin-chalcone or chalcone) which can under specific conditions spontaneously isomerize into naringenin. The polypeptide is Chalcone synthase C (CHSC) (Ipomoea purpurea (Common morning glory)).